Here is a 303-residue protein sequence, read N- to C-terminus: Glutaminase (303 aa).

Substrate is bound by residues Ser61, Asn111, Glu155, Asn162, Tyr186, Tyr238, and Val256.

The protein belongs to the glutaminase family. As to quaternary structure, homotetramer.

It catalyses the reaction L-glutamine + H2O = L-glutamate + NH4(+). The sequence is that of Glutaminase from Marinomonas sp. (strain MWYL1).